The primary structure comprises 692 residues: Elongation factor G (692 aa).

A tr-type G domain is found at 8–282; that stretch reads ENTRNIGIMA…GVVDYLPSPL (275 aa). Residues 17 to 24, 81 to 85, and 135 to 138 each bind GTP; these read AHIDAGKT, DTPGH, and NKMD.

This sequence belongs to the TRAFAC class translation factor GTPase superfamily. Classic translation factor GTPase family. EF-G/EF-2 subfamily.

The protein localises to the cytoplasm. Functionally, catalyzes the GTP-dependent ribosomal translocation step during translation elongation. During this step, the ribosome changes from the pre-translocational (PRE) to the post-translocational (POST) state as the newly formed A-site-bound peptidyl-tRNA and P-site-bound deacylated tRNA move to the P and E sites, respectively. Catalyzes the coordinated movement of the two tRNA molecules, the mRNA and conformational changes in the ribosome. The protein is Elongation factor G of Geobacillus thermodenitrificans (strain NG80-2).